A 424-amino-acid chain; its full sequence is 26S proteasome regulatory subunit 6A homolog A (424 aa).

The interval 1-21 (MATPMVEDTSSFEEDQLASMS) is disordered. An N-acetylalanine modification is found at A2. A Phosphoserine modification is found at S19. 212–219 (GPPGTGKT) is an ATP binding site. Residue K235 forms a Glycyl lysine isopeptide (Lys-Gly) (interchain with G-Cter in ubiquitin) linkage. O-acetylthreonine is present on T278. Residues K279 and K416 each participate in a glycyl lysine isopeptide (Lys-Gly) (interchain with G-Cter in ubiquitin) cross-link.

Belongs to the AAA ATPase family. Component of the 19S regulatory particle (RP/PA700) base subcomplex of the 26S proteasome. The 26S proteasome is composed of a core protease (CP), known as the 20S proteasome, capped at one or both ends by the 19S regulatory particle (RP/PA700). The RP/PA700 complex is composed of at least 17 different subunits in two subcomplexes, the base and the lid, which form the portions proximal and distal to the 20S proteolytic core, respectively. As to expression, ubiquitous.

It localises to the cytoplasm. Its subcellular location is the nucleus. The 26S proteasome is involved in the ATP-dependent degradation of ubiquitinated proteins. The regulatory (or ATPase) complex confers ATP dependency and substrate specificity to the 26S complex. Interacts with transit peptides of proteins targeted to the chloroplast, and may be involved in the degradation of unimported plastid protein precursors. Plays a essential role in the gametophyte development. Involved in tolerance to zinc deficiency, possibly through alleviation of oxidative stresses or processing of poly-ubiquitinated proteins. This chain is 26S proteasome regulatory subunit 6A homolog A, found in Arabidopsis thaliana (Mouse-ear cress).